Here is a 783-residue protein sequence, read N- to C-terminus: Endonuclease MutS2 (783 aa).

328 to 335 (GPNTGGKT) is an ATP binding site. Residues 708–783 (LDLRGKRYEE…GSGCTIATLG (76 aa)) form the Smr domain.

This sequence belongs to the DNA mismatch repair MutS family. MutS2 subfamily. As to quaternary structure, homodimer. Binds to stalled ribosomes, contacting rRNA.

Its function is as follows. Endonuclease that is involved in the suppression of homologous recombination and thus may have a key role in the control of bacterial genetic diversity. In terms of biological role, acts as a ribosome collision sensor, splitting the ribosome into its 2 subunits. Detects stalled/collided 70S ribosomes which it binds and splits by an ATP-hydrolysis driven conformational change. Acts upstream of the ribosome quality control system (RQC), a ribosome-associated complex that mediates the extraction of incompletely synthesized nascent chains from stalled ribosomes and their subsequent degradation. Probably generates substrates for RQC. The protein is Endonuclease MutS2 of Streptococcus thermophilus (strain ATCC BAA-250 / LMG 18311).